The primary structure comprises 293 residues: Undecaprenyl-diphosphatase (293 aa).

The next 6 membrane-spanning stretches (helical) occupy residues 74–94 (VLVF…AGVF), 107–127 (WMII…KDLI), 134–154 (MWIT…AEKM), 209–229 (FLLA…DAFA), 243–263 (VGTL…MKFV), and 271–291 (FAAY…LGML).

The protein belongs to the UppP family.

The protein resides in the cell membrane. It carries out the reaction di-trans,octa-cis-undecaprenyl diphosphate + H2O = di-trans,octa-cis-undecaprenyl phosphate + phosphate + H(+). Catalyzes the dephosphorylation of undecaprenyl diphosphate (UPP). Confers resistance to bacitracin. This chain is Undecaprenyl-diphosphatase, found in Corynebacterium glutamicum (strain R).